A 668-amino-acid polypeptide reads, in one-letter code: DNA ligase (668 aa).

NAD(+) contacts are provided by residues 34–38, 83–84, and glutamate 114; these read DTEYD and SL. Lysine 116 acts as the N6-AMP-lysine intermediate in catalysis. NAD(+)-binding residues include arginine 137, glutamate 171, lysine 286, and lysine 310. Residues cysteine 404, cysteine 407, cysteine 422, and cysteine 427 each coordinate Zn(2+). The BRCT domain occupies 588 to 668; it reads NSDSIIANKS…FFDLLKSEKG (81 aa).

Belongs to the NAD-dependent DNA ligase family. LigA subfamily. It depends on Mg(2+) as a cofactor. The cofactor is Mn(2+).

It catalyses the reaction NAD(+) + (deoxyribonucleotide)n-3'-hydroxyl + 5'-phospho-(deoxyribonucleotide)m = (deoxyribonucleotide)n+m + AMP + beta-nicotinamide D-nucleotide.. Functionally, DNA ligase that catalyzes the formation of phosphodiester linkages between 5'-phosphoryl and 3'-hydroxyl groups in double-stranded DNA using NAD as a coenzyme and as the energy source for the reaction. It is essential for DNA replication and repair of damaged DNA. The sequence is that of DNA ligase from Mycoplasma mycoides subsp. mycoides SC (strain CCUG 32753 / NCTC 10114 / PG1).